The primary structure comprises 1141 residues: Putative late blight resistance protein homolog R1B-13 (1141 aa).

The stretch at 417 to 437 forms a coiled coil; it reads DSLAFLKNQIQVIQMEFEILQ. An NB-ARC domain is found at 516–742; it reads TVITHTSSQL…LSIVLVADVL (227 aa). LRR repeat units follow at residues 826–851, 869–894, 992–1016, 1017–1041, and 1043–1068; these read FKFL…PYLR, LWNL…VWDM, APNL…TVDH, LKHL…VSNG, and FPQL…AFPI.

The protein belongs to the disease resistance NB-LRR family.

Its subcellular location is the cytoplasm. The protein localises to the membrane. Confers resistance to late blight (Phytophthora infestans) races carrying the avirulence gene Avr1. Resistance proteins guard the plant against pathogens that contain an appropriate avirulence protein via an indirect interaction with this avirulence protein. That triggers a defense system including the hypersensitive response, which restricts the pathogen growth. This Solanum demissum (Wild potato) protein is Putative late blight resistance protein homolog R1B-13 (R1B-13).